The sequence spans 158 residues: 2-C-methyl-D-erythritol 2,4-cyclodiphosphate synthase (158 aa).

A divalent metal cation-binding residues include Asp9 and His11. 4-CDP-2-C-methyl-D-erythritol 2-phosphate is bound by residues 9–11 (DVH) and 35–36 (HS). His43 contacts a divalent metal cation. 4-CDP-2-C-methyl-D-erythritol 2-phosphate contacts are provided by residues 57 to 59 (DIG), 62 to 66 (FPDTD), 101 to 107 (AQKPKMA), 133 to 136 (TTTE), Phe140, and Arg143.

The protein belongs to the IspF family. Homotrimer. Requires a divalent metal cation as cofactor.

It carries out the reaction 4-CDP-2-C-methyl-D-erythritol 2-phosphate = 2-C-methyl-D-erythritol 2,4-cyclic diphosphate + CMP. It participates in isoprenoid biosynthesis; isopentenyl diphosphate biosynthesis via DXP pathway; isopentenyl diphosphate from 1-deoxy-D-xylulose 5-phosphate: step 4/6. Involved in the biosynthesis of isopentenyl diphosphate (IPP) and dimethylallyl diphosphate (DMAPP), two major building blocks of isoprenoid compounds. Catalyzes the conversion of 4-diphosphocytidyl-2-C-methyl-D-erythritol 2-phosphate (CDP-ME2P) to 2-C-methyl-D-erythritol 2,4-cyclodiphosphate (ME-CPP) with a corresponding release of cytidine 5-monophosphate (CMP). This is 2-C-methyl-D-erythritol 2,4-cyclodiphosphate synthase from Bacillus pumilus (strain SAFR-032).